The following is a 501-amino-acid chain: COP9 signalosome complex subunit 3 (501 aa).

Residues 275 to 445 form the PCI domain; it reads RFEDALFLLE…VFWTELSPVP (171 aa).

The protein belongs to the CSN3 family. As to quaternary structure, component of the CSN complex, probably composed of csn-1, csn-2, csn-3, csn-4, csn-5, csn-6 and csn-7. Within the complex it probably interacts directly with csn-2 and csn-4. May interact with itself.

It is found in the cytoplasm. The protein localises to the nucleus. In terms of biological role, component of the COP9 signalosome complex (CSN), a complex involved in various cellular and developmental processes. The CSN complex is an essential regulator of the ubiquitin (Ubl) conjugation pathway by mediating the deneddylation of the cullin subunits of the SCF-type E3 ligase complexes, leading to decrease the Ubl ligase activity of SCF. The CSN complex plays an essential role in embryogenesis and oogenesis and is required to regulate microtubule stability in the early embryo. Mediates mei-3/katanin targeting for degradation at the meiosis to mitosis transition via deneddylation of cul-3. This is COP9 signalosome complex subunit 3 (csn-3) from Caenorhabditis elegans.